The following is a 211-amino-acid chain: Probable transcriptional regulatory protein SgaR (211 aa).

Positions 10 to 126 (EVSIVDQNPV…VLLEAVVSVA (117 aa)) constitute a Response regulatory domain. The residue at position 15 (Asp-15) is a 4-aspartylphosphate. The HTH luxR-type domain occupies 141 to 206 (NHDPLESLTA…MAVALHVSIN (66 aa)). Positions 165-184 (NLQIAARTGISRNTVKYHLK) form a DNA-binding region, H-T-H motif.

Functionally, not known. Could act on the sgaA gene expression. In Hyphomicrobium methylovorum, this protein is Probable transcriptional regulatory protein SgaR (sgaR).